We begin with the raw amino-acid sequence, 59 residues long: UPF0434 protein Ping_0902 (59 aa).

Belongs to the UPF0434 family.

The polypeptide is UPF0434 protein Ping_0902 (Psychromonas ingrahamii (strain DSM 17664 / CCUG 51855 / 37)).